The following is a 216-amino-acid chain: Acyl-homoserine-lactone synthase (216 aa).

This sequence belongs to the autoinducer synthase family.

The enzyme catalyses a fatty acyl-[ACP] + S-adenosyl-L-methionine = an N-acyl-L-homoserine lactone + S-methyl-5'-thioadenosine + holo-[ACP] + H(+). In terms of biological role, required for the synthesis of OHHL (N-(3-oxohexanoyl)-L-homoserine lactone), an autoinducer molecule which binds to a yet uncharacterized transcriptional regulator. The polypeptide is Acyl-homoserine-lactone synthase (eagI) (Enterobacter agglomerans (Erwinia herbicola)).